Consider the following 500-residue polypeptide: L-arabinose isomerase (500 aa).

The Mn(2+) site is built by Glu306, Glu331, His348, and His447.

Belongs to the arabinose isomerase family. The cofactor is Mn(2+).

It carries out the reaction beta-L-arabinopyranose = L-ribulose. Its pathway is carbohydrate degradation; L-arabinose degradation via L-ribulose; D-xylulose 5-phosphate from L-arabinose (bacterial route): step 1/3. Functionally, catalyzes the conversion of L-arabinose to L-ribulose. In Anoxybacillus flavithermus (strain DSM 21510 / WK1), this protein is L-arabinose isomerase.